A 250-amino-acid chain; its full sequence is 1-(5-phosphoribosyl)-5-[(5-phosphoribosylamino)methylideneamino] imidazole-4-carboxamide isomerase (250 aa).

The Proton acceptor role is filled by Asp-12. Residue Asp-133 is the Proton donor of the active site.

It belongs to the HisA/HisF family.

The protein resides in the cytoplasm. It carries out the reaction 1-(5-phospho-beta-D-ribosyl)-5-[(5-phospho-beta-D-ribosylamino)methylideneamino]imidazole-4-carboxamide = 5-[(5-phospho-1-deoxy-D-ribulos-1-ylimino)methylamino]-1-(5-phospho-beta-D-ribosyl)imidazole-4-carboxamide. It functions in the pathway amino-acid biosynthesis; L-histidine biosynthesis; L-histidine from 5-phospho-alpha-D-ribose 1-diphosphate: step 4/9. This chain is 1-(5-phosphoribosyl)-5-[(5-phosphoribosylamino)methylideneamino] imidazole-4-carboxamide isomerase, found in Zymomonas mobilis subsp. mobilis (strain ATCC 31821 / ZM4 / CP4).